Consider the following 235-residue polypeptide: Phosphoribosylaminoimidazole-succinocarboxamide synthase (235 aa).

Belongs to the SAICAR synthetase family.

It catalyses the reaction 5-amino-1-(5-phospho-D-ribosyl)imidazole-4-carboxylate + L-aspartate + ATP = (2S)-2-[5-amino-1-(5-phospho-beta-D-ribosyl)imidazole-4-carboxamido]succinate + ADP + phosphate + 2 H(+). Its pathway is purine metabolism; IMP biosynthesis via de novo pathway; 5-amino-1-(5-phospho-D-ribosyl)imidazole-4-carboxamide from 5-amino-1-(5-phospho-D-ribosyl)imidazole-4-carboxylate: step 1/2. The polypeptide is Phosphoribosylaminoimidazole-succinocarboxamide synthase (Streptococcus gordonii (strain Challis / ATCC 35105 / BCRC 15272 / CH1 / DL1 / V288)).